We begin with the raw amino-acid sequence, 106 residues long: Aspartyl/glutamyl-tRNA(Asn/Gln) amidotransferase subunit C (106 aa).

Belongs to the GatC family. Heterotrimer of A, B and C subunits.

It carries out the reaction L-glutamyl-tRNA(Gln) + L-glutamine + ATP + H2O = L-glutaminyl-tRNA(Gln) + L-glutamate + ADP + phosphate + H(+). It catalyses the reaction L-aspartyl-tRNA(Asn) + L-glutamine + ATP + H2O = L-asparaginyl-tRNA(Asn) + L-glutamate + ADP + phosphate + 2 H(+). Functionally, allows the formation of correctly charged Asn-tRNA(Asn) or Gln-tRNA(Gln) through the transamidation of misacylated Asp-tRNA(Asn) or Glu-tRNA(Gln) in organisms which lack either or both of asparaginyl-tRNA or glutaminyl-tRNA synthetases. The reaction takes place in the presence of glutamine and ATP through an activated phospho-Asp-tRNA(Asn) or phospho-Glu-tRNA(Gln). This Lactiplantibacillus plantarum (strain ATCC BAA-793 / NCIMB 8826 / WCFS1) (Lactobacillus plantarum) protein is Aspartyl/glutamyl-tRNA(Asn/Gln) amidotransferase subunit C.